The primary structure comprises 422 residues: ORC1-type DNA replication protein 13 (422 aa).

Residues 80–84, tyrosine 231, and arginine 243 contribute to the ATP site; that span reads TGKTL.

The protein belongs to the CDC6/cdc18 family.

Its function is as follows. Involved in regulation of DNA replication. This chain is ORC1-type DNA replication protein 13 (cdc6m), found in Haloarcula marismortui (strain ATCC 43049 / DSM 3752 / JCM 8966 / VKM B-1809) (Halobacterium marismortui).